The primary structure comprises 166 residues: Large ribosomal subunit protein eL14 (166 aa).

The tract at residues 135–166 (KADGTPRVLKKDRRERLRAEKAKGGKKAAAKK) is disordered. The segment covering 146–157 (DRRERLRAEKAK) has biased composition (basic and acidic residues).

The protein belongs to the eukaryotic ribosomal protein eL14 family.

The chain is Large ribosomal subunit protein eL14 (RpL14) from Drosophila melanogaster (Fruit fly).